We begin with the raw amino-acid sequence, 273 residues long: Putative peptidyl-prolyl cis-trans isomerase Cbf2 (273 aa).

The signal sequence occupies residues 1 to 21; that stretch reads MKKFSLVAAALIAGVALNVNA. Positions 131–228 constitute a PpiC domain; the sequence is PARVQAKHIL…FGYHVILKEN (98 aa).

It catalyses the reaction [protein]-peptidylproline (omega=180) = [protein]-peptidylproline (omega=0). This chain is Putative peptidyl-prolyl cis-trans isomerase Cbf2 (cbf2), found in Campylobacter jejuni subsp. jejuni serotype O:23/36 (strain 81-176).